Here is a 644-residue protein sequence, read N- to C-terminus: Chaperone protein DnaK (644 aa).

Residue Thr-199 is modified to Phosphothreonine; by autocatalysis. The tract at residues 603-644 is disordered; the sequence is YAKKSSEGQAAQGQTQSQESTKPAEEGVVDAEFEEVKEEDKK. Polar residues predominate over residues 609 to 623; that stretch reads EGQAAQGQTQSQEST. A compositionally biased stretch (acidic residues) spans 629-644; it reads GVVDAEFEEVKEEDKK.

This sequence belongs to the heat shock protein 70 family.

Acts as a chaperone. In Legionella pneumophila (strain Corby), this protein is Chaperone protein DnaK.